Reading from the N-terminus, the 192-residue chain is Imidazoleglycerol-phosphate dehydratase (192 aa).

This sequence belongs to the imidazoleglycerol-phosphate dehydratase family.

It localises to the cytoplasm. It catalyses the reaction D-erythro-1-(imidazol-4-yl)glycerol 3-phosphate = 3-(imidazol-4-yl)-2-oxopropyl phosphate + H2O. It functions in the pathway amino-acid biosynthesis; L-histidine biosynthesis; L-histidine from 5-phospho-alpha-D-ribose 1-diphosphate: step 6/9. In Caldivirga maquilingensis (strain ATCC 700844 / DSM 13496 / JCM 10307 / IC-167), this protein is Imidazoleglycerol-phosphate dehydratase.